Here is a 490-residue protein sequence, read N- to C-terminus: Betaine aldehyde dehydrogenase (490 aa).

Thr26, Ile27, and Asp93 together coordinate K(+). NAD(+) is bound at residue 150–152 (GAW). Residue Lys162 is the Charge relay system of the active site. 176–179 (KPSE) contacts NAD(+). A K(+)-binding site is contributed by Val180. 230–233 (GTST) serves as a coordination point for NAD(+). Leu246 serves as a coordination point for K(+). Glu252 acts as the Proton acceptor in catalysis. Positions 254, 286, and 387 each coordinate NAD(+). The active-site Nucleophile is Cys286. Cys286 bears the Cysteine sulfenic acid (-SOH) mark. K(+)-binding residues include Lys457 and Gly460. Catalysis depends on Glu464, which acts as the Charge relay system.

The protein belongs to the aldehyde dehydrogenase family. As to quaternary structure, dimer of dimers. It depends on K(+) as a cofactor.

The enzyme catalyses betaine aldehyde + NAD(+) + H2O = glycine betaine + NADH + 2 H(+). It functions in the pathway amine and polyamine biosynthesis; betaine biosynthesis via choline pathway; betaine from betaine aldehyde: step 1/1. Involved in the biosynthesis of the osmoprotectant glycine betaine. Catalyzes the irreversible oxidation of betaine aldehyde to the corresponding acid. The chain is Betaine aldehyde dehydrogenase from Pseudomonas aeruginosa (strain UCBPP-PA14).